Consider the following 202-residue polypeptide: Response regulator RamR (202 aa).

The response regulatory stretch occupies residues 1-121; sequence MGEMVRIAVV…LITAVHTVAR (121 aa). Positions 135 to 200 constitute an HTH luxR-type domain; the sequence is LKGAEMPLTT…DAIRIVQSAG (66 aa). The H-T-H motif DNA-binding region spans 159–178; sequence IAEIAARLHLSRGTVRNYMA.

In terms of assembly, homodimer, in the absence of phosphorylation. May be phosphorylated by an unknown kinase, probably on Asp-56.

Its function is as follows. A transcription factor required for aerial hyphae formation on rich medium. Activates transcription of ramC. Might be part of a two-component regulatory system. Binds the promoter of ramC. Non-phosphorylated protein cooperatively binds multiple sites in the ramC promoter. Has not been seen to autophosphorylate using the small molecule phosphodonors phosphoramidate, acetyl phosphate or carbamoyl phosphate. Upon low expression suppresses the bald (bld, no aerial hyphae) phenotype of citA but not bldJ mutants; higher expression also suppresses the bldJ mutant as well as several other bld mutations, inducing SapB production even on media where SapB is normally not produced. Expression of the ram locus (ramA, ramB and ramR) induces rapid aerial mycelium formation in S.lividans. Overexpression suppresses the no aerial hyphae phenotype of a chaplin-negative strain, probably by inducing expression of SapB. Overexpression of RamR show there are about 280 genes having at least a threefold increase or fourfold decrease in RNA abundance versus wild-type including gene cluster SCO4072-SCO4075. This is Response regulator RamR from Streptomyces coelicolor (strain ATCC BAA-471 / A3(2) / M145).